The following is a 190-amino-acid chain: Vascular endothelial growth factor A (190 aa).

A signal peptide spans 1–26 (MNFLLSWVHWTLALLLYLHHAKWSQA). 3 disulfide bridges follow: cysteine 51-cysteine 93, cysteine 82-cysteine 127, and cysteine 86-cysteine 129. N-linked (GlcNAc...) asparagine glycosylation is present at asparagine 100.

This sequence belongs to the PDGF/VEGF growth factor family. Homodimer; disulfide-linked. Also found as heterodimer with PGF. Interacts with NRP1. Interacts with isoform 2 of BSG. Interacts with CD82; this interaction inhibits VEGFA-mediated signaling pathway.

It localises to the secreted. Functionally, growth factor active in angiogenesis, vasculogenesis and endothelial cell growth. Induces endothelial cell proliferation, promotes cell migration, inhibits apoptosis and induces permeabilization of blood vessels. Binds to the FLT1/VEGFR1 and KDR/VEGFR2 receptors, heparan sulfate and heparin. Binding to NRP1 receptor initiates a signaling pathway needed for motor neuron axon guidance and cell body migration, including for the caudal migration of facial motor neurons from rhombomere 4 to rhombomere 6 during embryonic development. Also binds the DEAR/FBXW7-AS1 receptor. The polypeptide is Vascular endothelial growth factor A (VEGFA) (Mesocricetus auratus (Golden hamster)).